The chain runs to 452 residues: Probable dihydrolipoyllysine-residue succinyltransferase component of 2-oxoglutarate dehydrogenase complex, mitochondrial (452 aa).

In terms of domain architecture, Lipoyl-binding spans 42–117; the sequence is STRIKTPPFP…TIDQDIAVID (76 aa). At Lys83 the chain carries N6-lipoyllysine. The segment at 119–225 is disordered; sequence SAAPPEGGSA…FSRNEDRVKM (107 aa). 3 stretches are compositionally biased toward basic and acidic residues: residues 130–144, 154–170, and 195–209; these read PKKD…DAAK, KPIE…EQKE, and AKSE…KATE. Residues His424 and Asp428 contribute to the active site.

Belongs to the 2-oxoacid dehydrogenase family. (R)-lipoate serves as cofactor.

The protein localises to the mitochondrion. The catalysed reaction is N(6)-[(R)-dihydrolipoyl]-L-lysyl-[protein] + succinyl-CoA = N(6)-[(R)-S(8)-succinyldihydrolipoyl]-L-lysyl-[protein] + CoA. It functions in the pathway amino-acid degradation; L-lysine degradation via saccharopine pathway; glutaryl-CoA from L-lysine: step 6/6. Functionally, the 2-oxoglutarate dehydrogenase complex catalyzes the overall conversion of 2-oxoglutarate to succinyl-CoA and CO(2). It contains multiple copies of three enzymatic components: 2-oxoglutarate dehydrogenase (E1), dihydrolipoamide succinyltransferase (E2) and lipoamide dehydrogenase (E3). This chain is Probable dihydrolipoyllysine-residue succinyltransferase component of 2-oxoglutarate dehydrogenase complex, mitochondrial (kgd2), found in Schizosaccharomyces pombe (strain 972 / ATCC 24843) (Fission yeast).